The primary structure comprises 358 residues: Small ribosomal subunit biogenesis GTPase RsgA (358 aa).

The CP-type G domain maps to 76–234; it reads STEIDRPAVA…LADSPGFNQP (159 aa). GTP is bound by residues 125 to 128 and 176 to 184; these read NKID and GPSGVGKSS. Positions 259, 264, 266, and 272 each coordinate Zn(2+). The disordered stretch occupies residues 319–358; the sequence is TYEPKLANKKYRRPSRRGKNQDQERYENKTLQDIYNDDSE. Residues 325-336 show a composition bias toward basic residues; sequence ANKKYRRPSRRG. Residues 337-348 show a composition bias toward basic and acidic residues; that stretch reads KNQDQERYENKT.

This sequence belongs to the TRAFAC class YlqF/YawG GTPase family. RsgA subfamily. Monomer. Associates with 30S ribosomal subunit, binds 16S rRNA. Zn(2+) serves as cofactor.

Its subcellular location is the cytoplasm. One of several proteins that assist in the late maturation steps of the functional core of the 30S ribosomal subunit. Helps release RbfA from mature subunits. May play a role in the assembly of ribosomal proteins into the subunit. Circularly permuted GTPase that catalyzes slow GTP hydrolysis, GTPase activity is stimulated by the 30S ribosomal subunit. This chain is Small ribosomal subunit biogenesis GTPase RsgA, found in Microcystis aeruginosa (strain NIES-843 / IAM M-2473).